Reading from the N-terminus, the 1102-residue chain is Avirulence protein AvrXa10 (1102 aa).

Disordered stretches follow at residues 1-68 (MDPI…SAGS) and 127-151 (ARPP…PAAQ). Basic residues predominate over residues 130-140 (PRAKPAPRRRA). Residues 141-151 (AQPSDASPAAQ) show a composition bias toward low complexity. Core repeat repeat units follow at residues 288–321 (LTPD…QAHG), 322–355 (LTPD…QAHG), 356–389 (LTPD…QDHG), 390–423 (LTPD…QDHG), 424–457 (LTPD…QDHG), 458–491 (LTPD…QDHG), 492–525 (LTPD…QTHG), 526–559 (LTPD…QDHG), 560–593 (LTPD…QAHG), 594–627 (LTPD…QDHG), 628–661 (LTPD…QDHG), 662–695 (LTPA…QDHG), 696–729 (LTPV…QDHG), 730–763 (LTPV…QDHG), and 764–797 (LTPV…QDHG). The stretch at 798–809 (LTPDQVVAIASN) is one Core repeat 15.5 repeat. Positions 951-954 (KRVK) match the Nuclear localization sequence A (NLSA) motif. Basic and acidic residues predominate over residues 978–990 (DLDAPSPMHEGDQ). The tract at residues 978–1021 (DLDAPSPMHEGDQTRASSRKRSRSDRAVTGPSTQQSFEVRVPEQ) is disordered. The short motif at 997–1000 (KRSR) is the Nuclear localization sequence B (NLSB) element. Positions 1034-1037 (KRPR) match the Nuclear localization sequence C (NLSC) motif. Residues 1063–1093 (WEQDAAPFAGAADDFPAFNEEELAWLMELLP) are activation domain.

Belongs to the transcription activator-like effector (TALE) family.

The protein resides in the secreted. The protein localises to the host nucleus. Its function is as follows. Avirulence protein. Induces the hypersensitive response (HR)in rice plants carrying the resistance gene Xa10. Activity depends on the presence of the core repeat domains; replacement with repeat domains from other proteins (AvrBs3 of X.euvesicatoria (AC P14727) or AvrXa7 of this organism) does not elicit the HR. Probably acts as a transcription factor in its host plant (rice) to induce plant resistance or disease. This chain is Avirulence protein AvrXa10, found in Xanthomonas oryzae pv. oryzae.